The sequence spans 306 residues: Lipid A biosynthesis palmitoleoyltransferase (306 aa).

A helical transmembrane segment spans residues 20–40 (WFGLGVLWLWVQLPYPVLCFL). Residues 132 to 137 (HFMSLE) carry the HXXXXD motif motif.

This sequence belongs to the LpxL/LpxM/LpxP family. LpxP subfamily.

The protein localises to the cell inner membrane. The enzyme catalyses (9Z)-hexadecenoyl-[ACP] + alpha-Kdo-(2-&gt;4)-alpha-Kdo-(2-&gt;6)-lipid IVA (E. coli) = (9Z)-hexadecenoyl-(Kdo)2-lipid IVA (E. coli) + holo-[ACP]. The protein operates within bacterial outer membrane biogenesis; lipopolysaccharide biosynthesis. Catalyzes the transfer of palmitoleate from palmitoleoyl-[acyl-carrier-protein] (ACP) to Kdo(2)-lipid IV(A) to form Kdo(2)-(palmitoleoyl)-lipid IV(A). Required for the biosynthesis of a distinct molecular species of lipid A, which is present only in cells grown at low temperatures. It may confer a selective advantage to cells growing at lower temperatures by making the outer membrane a more effective barrier to harmful chemicals. The polypeptide is Lipid A biosynthesis palmitoleoyltransferase (Escherichia coli (strain K12)).